The sequence spans 1120 residues: Terminal uridylyltransferase 1 (1120 aa).

2 disordered regions span residues 1–156 (MSKY…SAVE) and 196–221 (AALI…PHTP). Residues 7–16 (LFNQGTKDGT) show a composition bias toward polar residues. Residues 17 to 59 (NASSGSEANSANITSSSAPASSTNTSSPTSSESAVVSPPASTS) are compositionally biased toward low complexity. Over residues 60–70 (PRRRLIHRRHG) the composition is skewed to basic residues. The segment covering 90 to 103 (NEEKHENFISDSVH) has biased composition (basic and acidic residues). Residues 118–128 (LTTSGSETVMS) show a composition bias toward polar residues. 2 stretches are compositionally biased toward low complexity: residues 134 to 154 (AFEA…STSA) and 207 to 217 (SSAVSSSSSGS). The segment at 222 to 253 (PRLFTCDMCLQYVSTSYEALEQHALDQHGDAL) adopts a C2H2-type; atypical zinc-finger fold. Zn(2+) is bound by residues C227, C230, H244, and H249. UTP is bound by residues S330 and 341–344 (SDID). The Mg(2+) site is built by D342 and D344. Position 390 (R390) interacts with RNA. D548 provides a ligand contact to Mg(2+). UTP is bound by residues 555 to 559 (GIRNS), K580, K584, and 598 to 599 (SY). Positions 659-697 (GELLLGFFYYYAFEFDWVNHVVSLNRPGITTKASLGWDV) constitute a PAP-associated domain. An important for catalytic activity and RNA binding region spans residues 750–1120 (GMMASSASAA…ARRVLRLLFR (371 aa)). Positions 773–782 (IEDPYEENLN) match the Nucleotide recognition motif (NRM) motif. Residues 800–900 (YRGLLSLLKD…LLSDLEAAFL (101 aa)) are involved in oligomerization. The disordered stretch occupies residues 1047–1076 (PSTTTQGEDPLASGTCEQGGVSPSLPTGAP).

Belongs to the DNA polymerase type-B-like family. In terms of assembly, homotetramer. Part of a 700kDa complex. Interacts with p45 and p50 RNA ligases. It depends on Mg(2+) as a cofactor. Requires Mn(2+) as cofactor.

The protein localises to the mitochondrion. The enzyme catalyses RNA(n) + UTP = RNA(n)-3'-uridine ribonucleotide + diphosphate. Zinc-binding is required for catalytic activity. In terms of biological role, terminal uridylyltransferase which is involved in the post-transcriptional editing of mitochondrial RNA, a process involving the addition and deletion of uridine (U) nucleotides in the pre-mRNA. Specifically, catalyzes the addition of Us to the 3'-hydroxyl group of guided RNA (gRNA), with a preference for RNAs terminating in 6 Us, but also can add Us to RNAs terminating in 6 adenines (A), 6 cytosines (C), or 6 guanines (G). Can mediate RNA-independent UTP polymerization in vitro. Can mediate pyrophosphate-dependent degradation of synthetic RNA ending with U residues in vitro. This is Terminal uridylyltransferase 1 from Leishmania tarentolae (Sauroleishmania tarentolae).